Reading from the N-terminus, the 127-residue chain is Protein ApaG (127 aa).

In terms of domain architecture, ApaG spans 3 to 127; the sequence is EGKKYQINIS…FTLAMPRVLH (125 aa).

This chain is Protein ApaG, found in Thiobacillus denitrificans (strain ATCC 25259 / T1).